A 503-amino-acid polypeptide reads, in one-letter code: Basic immunoglobulin-like variable motif-containing protein (503 aa).

Residues 1–26 (MPNVAETERSNDSGNGEHKSERKSPE) are compositionally biased toward basic and acidic residues. Disordered regions lie at residues 1 to 33 (MPNV…QGAV), 152 to 184 (TTNS…ECPQ), and 438 to 469 (ESQP…GRSF). Basic residues predominate over residues 155-172 (SKHKSGNAKKQVSKRKTS). The span at 173 to 184 (DKKGRYQKECPQ) shows a compositional bias: basic and acidic residues.

It belongs to the BIVM family. Widely expressed. Expressed at higher level in spleen, ovary, small intestine, colon, peripheral blood leukocytes and liver. Also expressed in testis, ovary, aorta, appendix, trachea, pituitary gland, bladder, uterus, spinal cord, salivary gland, stomach, mammary gland and bone marrow. Weakly or not expressed in fetal spleen, adult thymus and certain cancer cell lines.

The protein localises to the cytoplasm. It localises to the nucleus. The polypeptide is Basic immunoglobulin-like variable motif-containing protein (BIVM) (Homo sapiens (Human)).